Consider the following 150-residue polypeptide: 6,7-dimethyl-8-ribityllumazine synthase (150 aa).

Residues Phe11, 43-45 (VYD), and 67-69 (AVI) each bind 5-amino-6-(D-ribitylamino)uracil. 72 to 73 (AT) is a binding site for (2S)-2-hydroxy-3-oxobutyl phosphate. The active-site Proton donor is the His75. Leu100 serves as a coordination point for 5-amino-6-(D-ribitylamino)uracil. Arg115 serves as a coordination point for (2S)-2-hydroxy-3-oxobutyl phosphate.

Belongs to the DMRL synthase family.

It carries out the reaction (2S)-2-hydroxy-3-oxobutyl phosphate + 5-amino-6-(D-ribitylamino)uracil = 6,7-dimethyl-8-(1-D-ribityl)lumazine + phosphate + 2 H2O + H(+). It functions in the pathway cofactor biosynthesis; riboflavin biosynthesis; riboflavin from 2-hydroxy-3-oxobutyl phosphate and 5-amino-6-(D-ribitylamino)uracil: step 1/2. In terms of biological role, catalyzes the formation of 6,7-dimethyl-8-ribityllumazine by condensation of 5-amino-6-(D-ribitylamino)uracil with 3,4-dihydroxy-2-butanone 4-phosphate. This is the penultimate step in the biosynthesis of riboflavin. This chain is 6,7-dimethyl-8-ribityllumazine synthase, found in Pyrobaculum arsenaticum (strain DSM 13514 / JCM 11321 / PZ6).